Consider the following 719-residue polypeptide: Polyribonucleotide nucleotidyltransferase (719 aa).

Mg(2+) contacts are provided by Asp491 and Asp497. The region spanning 558–617 (PRMLTIKINPEKIRDVIGKGGATIRALTEETGTQIDISDDGTIVIASVDEAQAKEAQRRI) is the KH domain. The region spanning 627–695 (GQVYDGSVLR…DKGRLRLSVK (69 aa)) is the S1 motif domain.

The protein belongs to the polyribonucleotide nucleotidyltransferase family. Mg(2+) serves as cofactor.

Its subcellular location is the cytoplasm. The catalysed reaction is RNA(n+1) + phosphate = RNA(n) + a ribonucleoside 5'-diphosphate. Involved in mRNA degradation. Catalyzes the phosphorolysis of single-stranded polyribonucleotides processively in the 3'- to 5'-direction. The protein is Polyribonucleotide nucleotidyltransferase of Bordetella petrii (strain ATCC BAA-461 / DSM 12804 / CCUG 43448).